Here is a 64-residue protein sequence, read N- to C-terminus: DNA gyrase inhibitor YacG (64 aa).

4 residues coordinate Zn(2+): Cys7, Cys10, Cys26, and Cys30. Residues 44 to 64 (SIPGEPVVIANDDYNNEESDY) form a disordered region.

It belongs to the DNA gyrase inhibitor YacG family. Interacts with GyrB. Zn(2+) serves as cofactor.

In terms of biological role, inhibits all the catalytic activities of DNA gyrase by preventing its interaction with DNA. Acts by binding directly to the C-terminal domain of GyrB, which probably disrupts DNA binding by the gyrase. The protein is DNA gyrase inhibitor YacG of Idiomarina loihiensis (strain ATCC BAA-735 / DSM 15497 / L2-TR).